Consider the following 207-residue polypeptide: Histidine biosynthesis bifunctional protein HisIE (207 aa).

Positions 1–115 (MLSKKENLLK…FFLKENTLNF (115 aa)) are phosphoribosyl-AMP cyclohydrolase. A phosphoribosyl-ATP pyrophosphohydrolase region spans residues 116 to 207 (LSKLEDLIED…NLKKRKTEKL (92 aa)).

This sequence in the N-terminal section; belongs to the PRA-CH family. The protein in the C-terminal section; belongs to the PRA-PH family.

The protein localises to the cytoplasm. It catalyses the reaction 1-(5-phospho-beta-D-ribosyl)-ATP + H2O = 1-(5-phospho-beta-D-ribosyl)-5'-AMP + diphosphate + H(+). The enzyme catalyses 1-(5-phospho-beta-D-ribosyl)-5'-AMP + H2O = 1-(5-phospho-beta-D-ribosyl)-5-[(5-phospho-beta-D-ribosylamino)methylideneamino]imidazole-4-carboxamide. It functions in the pathway amino-acid biosynthesis; L-histidine biosynthesis; L-histidine from 5-phospho-alpha-D-ribose 1-diphosphate: step 2/9. The protein operates within amino-acid biosynthesis; L-histidine biosynthesis; L-histidine from 5-phospho-alpha-D-ribose 1-diphosphate: step 3/9. This is Histidine biosynthesis bifunctional protein HisIE (hisI) from Buchnera aphidicola subsp. Schizaphis graminum (strain Sg).